A 149-amino-acid chain; its full sequence is Transcriptional repressor NrdR (149 aa).

A zinc finger spans residues 3-34 (CPFCSATDTKVIDSRLVADGHQVRRRRECVQC). Residues 49-139 (PRVVKQDGSR…VYRAFEDVSE (91 aa)) form the ATP-cone domain.

The protein belongs to the NrdR family. Zn(2+) serves as cofactor.

Functionally, negatively regulates transcription of bacterial ribonucleotide reductase nrd genes and operons by binding to NrdR-boxes. This is Transcriptional repressor NrdR from Shewanella pealeana (strain ATCC 700345 / ANG-SQ1).